The primary structure comprises 128 residues: Methylglyoxal synthase (128 aa).

One can recognise an MGS-like domain in the interval 1 to 128 (MRIALIAHDR…MQDHPGNRQA (128 aa)). Substrate is bound by residues histidine 8, lysine 12, 34-37 (TGTT), and 54-55 (SG). Aspartate 60 serves as the catalytic Proton donor/acceptor. Histidine 87 contributes to the substrate binding site.

The protein belongs to the methylglyoxal synthase family.

The catalysed reaction is dihydroxyacetone phosphate = methylglyoxal + phosphate. Catalyzes the formation of methylglyoxal from dihydroxyacetone phosphate. This is Methylglyoxal synthase from Moorella thermoacetica (strain ATCC 39073 / JCM 9320).